Here is a 193-residue protein sequence, read N- to C-terminus: Lipopolysaccharide core heptose(II)-phosphate phosphatase (193 aa).

The first 25 residues, 1–25, serve as a signal peptide directing secretion; it reads MKLKKHVAVLLISFLCLIGLVTQHA.

This sequence belongs to the phosphoglycerate mutase family. Ais subfamily.

The protein resides in the periplasm. It functions in the pathway bacterial outer membrane biogenesis; lipopolysaccharide metabolism. Functionally, catalyzes the dephosphorylation of heptose(II) of the outer membrane lipopolysaccharide core. This is Lipopolysaccharide core heptose(II)-phosphate phosphatase from Escherichia fergusonii (strain ATCC 35469 / DSM 13698 / CCUG 18766 / IAM 14443 / JCM 21226 / LMG 7866 / NBRC 102419 / NCTC 12128 / CDC 0568-73).